The sequence spans 324 residues: Polyphosphate glucokinase (324 aa).

Positions 53–79 are disordered; the sequence is TSTDATADTPRTSPPSDTAGTTSRHRG. The span at 62 to 74 shows a compositional bias: polar residues; sequence PRTSPPSDTAGTT. 83 to 88 contacts ATP; that stretch reads DIGGSS.

Belongs to the ROK (NagC/XylR) family. As to quaternary structure, homodimer.

The enzyme catalyses [phosphate](n) + D-glucose = [phosphate](n-1) + D-glucose 6-phosphate + H(+). The catalysed reaction is D-glucose + ATP = D-glucose 6-phosphate + ADP + H(+). Functionally, catalyzes the phosphorylation of glucose using polyphosphate or ATP as the phosphoryl donor. In Mycobacterium leprae (strain TN), this protein is Polyphosphate glucokinase (ppgK).